The sequence spans 206 residues: METTMKKKGRVKATITSQKEEEGTVRKGPWTMEEDFILFNYILNHGEGLWNSVAKASGLKRTGKSCRLRWLNYLRPDVRRGNITEEEQLLIIQLHAKLGNRWSKIAKHLPGRTDNEIKNFWRTKIQRHMKVSSENMMNHQHHCSGNSQSSGMTTQGSSGKAIDTAESFSQAKTTTFNVVEQQSNENYWNVEDLWPVHLLNGDHHVI.

Positions Met-1–Val-11 are enriched in basic residues. The tract at residues Met-1–Glu-20 is disordered. HTH myb-type domains follow at residues Glu-22 to Leu-74 and Arg-75 to Met-129. 2 DNA-binding regions (H-T-H motif) span residues Trp-50 to Leu-74 and Trp-102 to Ile-125. The tract at residues Asn-138–Ile-162 is disordered. The span at Ser-144 to Gly-159 shows a compositional bias: low complexity.

Expressed specifically in flowers.

The protein resides in the nucleus. Transcription factor acting redundantly with MYB21 and MYB24 to control stamen filament elongation in the late developed flowers. Repressed at the transcript levels by DELLA proteins. This is Transcription factor MYB57 (MYB57) from Arabidopsis thaliana (Mouse-ear cress).